The chain runs to 172 residues: Small ribosomal subunit protein uS5 (172 aa).

One can recognise an S5 DRBM domain in the interval 16-79 (LKDRLVAINR…EAAKKNLIRV (64 aa)).

The protein belongs to the universal ribosomal protein uS5 family. In terms of assembly, part of the 30S ribosomal subunit. Contacts proteins S4 and S8.

With S4 and S12 plays an important role in translational accuracy. Functionally, located at the back of the 30S subunit body where it stabilizes the conformation of the head with respect to the body. The protein is Small ribosomal subunit protein uS5 of Porphyromonas gingivalis (strain ATCC BAA-308 / W83).